Reading from the N-terminus, the 619-residue chain is MSGLVLGQRDEPAGHRLSQEEILGSTRLVSQGLESLHSEHQAVLQSLSHTIECLQQGGHEEGLVHEKARQLRRSMENIELGLSEAQVMLALASHLSTVESEKQKLRAQVRRLCQENQWLRDELAGTQQRLQRSEQAVAQLEEEKKHLEFLRQLRQYDEDGHSMEEKEGDASKDSLDDLFPNEEEEDSSNDLSRGQGAAAAQQGGYEIPARLRTLHNLVIQYAAQGRYEVAVPLCKQALEDLERTSGRGHPDVATMLNILALVYRDQNKYKEAAHLLNDALSIRESTLGRDHPAVAATLNNLAVLYGKRGKYKEAEPLCQRALEIREKVLGTDHPDVAKQLNNLALLCQNQGKYEAVERYYQRALAIYERQLGPDNPNVARTKNNLASCYLKQGKYSEAETLYKEILTRAHVQEFGSVDDDHKPIWMHAEEREEMSRSRSRESGTPYAEYGGWYKACRVSSPTVNTTLRNLGALYRRQGKLEAAETLEECALRSRKQGTDPISQTKVAELLGEGDGRKTMQEGPGDSVKFEGGEDASVAVEWSGDGSGTLQRSGSLGKIRDVLRRSSELLVRKLQGTEPRPSSSNMKRAASLNYLNQPNAAPLQTSRGLSASTVDLSSSS.

N-acetylserine is present on Ser2. Positions Gly32–Leu150 form a coiled coil. The TPR 1 repeat unit spans residues Gln55–Met88. Positions Tyr156–Leu175 are enriched in basic and acidic residues. Residues Tyr156–Ala200 form a disordered region. Ser174 carries the phosphoserine modification. The span at Phe179–Ser188 shows a compositional bias: acidic residues. TPR repeat units follow at residues Leu211–Thr244, Ala253–Thr286, Ala295–Val328, Ala337–Gln370, and Ala379–Gln412. Ser460 bears the Phosphoserine mark. A TPR 7 repeat occupies Asn464–Gly497. Phosphoserine occurs at positions 565, 566, and 590. Residues Arg571 to Ser619 form a disordered region. The segment covering Asn592 to Leu608 has biased composition (polar residues). The span at Ser609 to Ser619 shows a compositional bias: low complexity. Thr612 carries the phosphothreonine modification.

The protein belongs to the kinesin light chain family. As to quaternary structure, oligomeric complex composed of two heavy chains and two light chains.

The protein resides in the cytoplasm. Its subcellular location is the cytoskeleton. Its function is as follows. Kinesin is a microtubule-associated force-producing protein that may play a role in organelle transport. The light chain may function in coupling of cargo to the heavy chain or in the modulation of its ATPase activity. The polypeptide is Kinesin light chain 4 (Klc4) (Rattus norvegicus (Rat)).